The chain runs to 607 residues: Protein NRT1/ PTR FAMILY 1.2 (607 aa).

Transmembrane regions (helical) follow at residues 65-85, 96-116, 138-158, 185-205, 215-235, 374-394, 418-438, 460-480, 496-516, and 544-564; these read TNVLFMWSAASNFTPLLGAFL, ISIASLSSFLGMVLLWLTAML, ASQLALLYSAFALISIGSGGI, FFGWYYASSAVAVLIAFTGIV, IGFGVPAVLMLIAALLFILAS, VPAGSFGMFTIIALALWVILY, MGLGLFMSFLAMAISAMVESF, AMWLVPQYVLHGLAEALTAIG, IAASLFGLGMAVASLLASVVL, and YYWVLAIMSFINVIYYVICSW. The residue at position 601 (serine 601) is a Phosphoserine.

It belongs to the major facilitator superfamily. Proton-dependent oligopeptide transporter (POT/PTR) (TC 2.A.17) family. As to expression, expressed in shoots, stems, leaves, flowers and siliques. Mainly detected in larger expanded leaves, in the companion cells of major veins.

The protein localises to the cell membrane. Its function is as follows. Low-affinity nitrate transporter involved in xylem-to-phloem transfer for redistributing nitrate into developing leaves. Not involved in dipeptides transport. The polypeptide is Protein NRT1/ PTR FAMILY 1.2 (NPF1.2) (Arabidopsis thaliana (Mouse-ear cress)).